The primary structure comprises 175 residues: Large ribosomal subunit protein uL10 (175 aa).

The protein belongs to the universal ribosomal protein uL10 family. Part of the ribosomal stalk of the 50S ribosomal subunit. The N-terminus interacts with L11 and the large rRNA to form the base of the stalk. The C-terminus forms an elongated spine to which L12 dimers bind in a sequential fashion forming a multimeric L10(L12)X complex.

In terms of biological role, forms part of the ribosomal stalk, playing a central role in the interaction of the ribosome with GTP-bound translation factors. This chain is Large ribosomal subunit protein uL10, found in Thermobifida fusca (strain YX).